A 289-amino-acid chain; its full sequence is Probable endonuclease 4 (289 aa).

His-76, His-116, Glu-152, Asp-186, His-189, His-220, Asp-233, His-235, and Glu-265 together coordinate Zn(2+).

The protein belongs to the AP endonuclease 2 family. The cofactor is Zn(2+).

The enzyme catalyses Endonucleolytic cleavage to 5'-phosphooligonucleotide end-products.. Its function is as follows. Endonuclease IV plays a role in DNA repair. It cleaves phosphodiester bonds at apurinic or apyrimidinic (AP) sites, generating a 3'-hydroxyl group and a 5'-terminal sugar phosphate. The protein is Probable endonuclease 4 of Malacoplasma penetrans (strain HF-2) (Mycoplasma penetrans).